The chain runs to 745 residues: Immunoglobulin superfamily containing leucine-rich repeat protein 2 (745 aa).

The first 18 residues, 1–18 (MFPLRALWLVWALLGVAG), serve as a signal peptide directing secretion. The region spanning 19–51 (SCPEPCACVDKYAHQFADCAYKELREVPEGLPA) is the LRRNT domain. Residues 19–589 (SCPEPCACVD…VFSTKKELPS (571 aa)) lie on the Extracellular side of the membrane. N-linked (GlcNAc...) asparagine glycosylation occurs at Asn52. LRR repeat units lie at residues 52–73 (NVTT…AFAD), 76–97 (QVTS…ALAV), 100–123 (QLKN…RNLS), 124–145 (ALQL…ALGA), and 148–169 (DLRS…TFDA). N-linked (GlcNAc...) asparagine glycosylation occurs at Asn121. Residues 181 to 232 (NPFHCGCGLVWLQAWAASTRVSLPEPDSIACASPPALQGVPVYRLPALPCAP) enclose the LRRCT domain. The region spanning 233–371 (PSVHLSAEPP…GANSTSIRVA (139 aa)) is the Ig-like domain. Residues Cys260 and Cys355 are joined by a disulfide bond. The segment at 287–326 (VLSGEDDGVGAEEGEGEGDGDLLTQTQAQTPTPAPAWPAP) is disordered. A compositionally biased stretch (acidic residues) spans 290-306 (GEDDGVGAEEGEGEGDG). N-linked (GlcNAc...) asparagine glycans are attached at residues Asn337 and Asn364. Residues 375-466 (TGPPKHAPGA…QRCGNGDPSR (92 aa)) are disordered. A compositionally biased stretch (acidic residues) spans 431-449 (TETEPEEDTSEGEEAEDQI). N-linked (GlcNAc...) asparagine glycosylation is found at Asn474 and Asn563. The helical transmembrane segment at 590–610 (LLVIVAVSVFLLVLATVPLLG) threads the bilayer. Over 611 to 745 (AACCHLLAKH…INGNYRQTAG (135 aa)) the chain is Cytoplasmic. Residues 656–722 (KSYPAGGEAG…FEAGSEYSDR (67 aa)) form a disordered region. Residues 665–683 (GGEEPEDVQGEGLDEDAEQ) are compositionally biased toward acidic residues. Tyr719 carries the phosphotyrosine modification. Position 720 is a phosphoserine (Ser720).

Homomultimer. Interacts with NTRK1/TrkA.

It is found in the cell membrane. In terms of biological role, required for axon extension during neural development. The protein is Immunoglobulin superfamily containing leucine-rich repeat protein 2 (ISLR2) of Homo sapiens (Human).